The chain runs to 66 residues: Sec-independent protein translocase protein TatA (66 aa).

Residues 1–21 (MSIGIWQIAIVVILVVLLFGR) form a helical membrane-spanning segment. Residues 43 to 66 (ATDITDEPEPKNVSENNQDSKDKE) form a disordered region. Residues 50 to 66 (PEPKNVSENNQDSKDKE) show a composition bias toward basic and acidic residues.

It belongs to the TatA/E family. As to quaternary structure, the Tat system comprises two distinct complexes: a TatABC complex, containing multiple copies of TatA, TatB and TatC subunits, and a separate TatA complex, containing only TatA subunits. Substrates initially bind to the TatABC complex, which probably triggers association of the separate TatA complex to form the active translocon.

The protein localises to the cell inner membrane. Functionally, part of the twin-arginine translocation (Tat) system that transports large folded proteins containing a characteristic twin-arginine motif in their signal peptide across membranes. TatA could form the protein-conducting channel of the Tat system. This Pelagibacter ubique (strain HTCC1062) protein is Sec-independent protein translocase protein TatA.